A 455-amino-acid chain; its full sequence is ATP-dependent protease ATPase subunit HslU (455 aa).

ATP contacts are provided by residues I19 and 61 to 66; that span reads GVGKTE. The interval 144-163 is disordered; that stretch reads ESKVGFANEPAEDAASKKEK. ATP is bound by residues D268, E333, and R405.

The protein belongs to the ClpX chaperone family. HslU subfamily. In terms of assembly, a double ring-shaped homohexamer of HslV is capped on each side by a ring-shaped HslU homohexamer. The assembly of the HslU/HslV complex is dependent on binding of ATP.

The protein resides in the cytoplasm. In terms of biological role, ATPase subunit of a proteasome-like degradation complex; this subunit has chaperone activity. The binding of ATP and its subsequent hydrolysis by HslU are essential for unfolding of protein substrates subsequently hydrolyzed by HslV. HslU recognizes the N-terminal part of its protein substrates and unfolds these before they are guided to HslV for hydrolysis. The protein is ATP-dependent protease ATPase subunit HslU of Francisella tularensis subsp. novicida (strain U112).